Consider the following 920-residue polypeptide: Histone-lysine N-methyltransferase, H3 lysine-4 specific (920 aa).

The region spanning 94-179 is the RRM domain; that stretch reads TQVFVSNISP…KPLSVVLDRD (86 aa). The span at 205-216 shows a compositional bias: basic and acidic residues; that stretch reads KQRFEREDESSR. 2 disordered regions span residues 205 to 242 and 448 to 485; these read KQRFEREDESSRQKLSAAMNEDIPPWRQPSKNSQTLSN and KRVDSSKMNLSAGSKTKSKLQRRRRRRHEARPLHYQLN. Composition is skewed to polar residues over residues 233 to 242 and 453 to 462; these read PSKNSQTLSN and SKMNLSAGSK. Residues 463–476 are compositionally biased toward basic residues; sequence TKSKLQRRRRRRHE. The short motif at 749–754 is the RxxxRR motif element; sequence RVNNRR. An SET domain is found at 781-898; the sequence is KQLHFGPSRI…HGEELTYDYK (118 aa). S-adenosyl-L-methionine is bound at residue Tyr-897. In terms of domain architecture, Post-SET spans 904 to 920; that stretch reads DKIPCLCGAPTCRGYLN.

Belongs to the class V-like SAM-binding methyltransferase superfamily. Component of the Set1C/COMPASS complex composed of ash2, sdc1, set1, shg1, spp1, swd1, swd2 and swd3.

It localises to the nucleus. Its subcellular location is the chromosome. The catalysed reaction is L-lysyl(4)-[histone H3] + 3 S-adenosyl-L-methionine = N(6),N(6),N(6)-trimethyl-L-lysyl(4)-[histone H3] + 3 S-adenosyl-L-homocysteine + 3 H(+). It carries out the reaction N(6)-methyl-L-lysyl(4)-[histone H3] + S-adenosyl-L-methionine = N(6),N(6)-dimethyl-L-lysyl(4)-[histone H3] + S-adenosyl-L-homocysteine + H(+). It catalyses the reaction N(6),N(6)-dimethyl-L-lysyl(4)-[histone H3] + S-adenosyl-L-methionine = N(6),N(6),N(6)-trimethyl-L-lysyl(4)-[histone H3] + S-adenosyl-L-homocysteine + H(+). Its function is as follows. Catalytic component of the COMPASS (Set1C) complex that specifically mono-, di- and trimethylates histone H3 to form H3K4me1/2/3. Binds RNA which might negatively affect its histone methyltransferase activity. COMPASS recognizes ubiquitinated H2B on one face of the nucleosome which stimulates the methylation of H3 on the opposing face. Methylation promotes maintenance of active chromatin states at euchromatic chromosomal domains and is present throughout the cell cycle. Plays a role in telomere maintenance and DNA repair in an ATM kinase rad3-dependent pathway. Required for efficient telomeric and centromeric silencing. The polypeptide is Histone-lysine N-methyltransferase, H3 lysine-4 specific (Schizosaccharomyces pombe (strain 972 / ATCC 24843) (Fission yeast)).